A 232-amino-acid chain; its full sequence is Adenosylcobinamide-GDP ribazoletransferase (232 aa).

6 helical membrane-spanning segments follow: residues Leu-31 to Leu-51, Val-59 to Asp-79, Val-102 to Leu-122, Pro-126 to Phe-146, Leu-167 to Ser-187, and Val-209 to Leu-229.

This sequence belongs to the CobS family. Mg(2+) serves as cofactor.

It is found in the cell inner membrane. It catalyses the reaction alpha-ribazole + adenosylcob(III)inamide-GDP = adenosylcob(III)alamin + GMP + H(+). The catalysed reaction is alpha-ribazole 5'-phosphate + adenosylcob(III)inamide-GDP = adenosylcob(III)alamin 5'-phosphate + GMP + H(+). Its pathway is cofactor biosynthesis; adenosylcobalamin biosynthesis; adenosylcobalamin from cob(II)yrinate a,c-diamide: step 7/7. Functionally, joins adenosylcobinamide-GDP and alpha-ribazole to generate adenosylcobalamin (Ado-cobalamin). Also synthesizes adenosylcobalamin 5'-phosphate from adenosylcobinamide-GDP and alpha-ribazole 5'-phosphate. The polypeptide is Adenosylcobinamide-GDP ribazoletransferase (Thermosipho africanus (strain TCF52B)).